The sequence spans 505 residues: uncharacterized protein (505 aa).

His431 functions as the Proton acceptor in the catalytic mechanism.

The protein belongs to the GMC oxidoreductase family. The cofactor is FAD.

This is an uncharacterized protein from Sinorhizobium fredii (strain NBRC 101917 / NGR234).